We begin with the raw amino-acid sequence, 627 residues long: F-box only protein 21 (627 aa).

Positions 27–76 constitute an F-box domain; the sequence is PSCLVQLPGEVLEYILCSGSLTALDIGRVSSTCRRLREVCQSSGQVWKEQ.

Directly interacts with SKP1 and CUL1.

Its function is as follows. Substrate-recognition component of the SCF (SKP1-CUL1-F-box protein)-type E3 ubiquitin ligase complex. This Mus musculus (Mouse) protein is F-box only protein 21 (Fbxo21).